The following is a 495-amino-acid chain: Glucose-6-phosphate 1-dehydrogenase (495 aa).

Residue Lys-51 forms an Isoglutamyl lysine isopeptide (Lys-Gln) (interchain with Q-Cter in protein Pup) linkage. NADP(+) is bound by residues 94–95 and Lys-154; that span reads DL. 4 residues coordinate substrate: His-184, Lys-188, Glu-222, and Asp-241. The active-site Proton acceptor is His-246. Lys-345 contributes to the substrate binding site.

Belongs to the glucose-6-phosphate dehydrogenase family.

It catalyses the reaction D-glucose 6-phosphate + NADP(+) = 6-phospho-D-glucono-1,5-lactone + NADPH + H(+). The protein operates within carbohydrate degradation; pentose phosphate pathway; D-ribulose 5-phosphate from D-glucose 6-phosphate (oxidative stage): step 1/3. Catalyzes the oxidation of glucose 6-phosphate to 6-phosphogluconolactone. This is Glucose-6-phosphate 1-dehydrogenase from Mycolicibacterium smegmatis (strain ATCC 700084 / mc(2)155) (Mycobacterium smegmatis).